The primary structure comprises 786 residues: DNA double-strand break repair Rad50 ATPase (786 aa).

ATP contacts are provided by residues Lys13, 33–39, and Gln138; that span reads NGSGKTT. 3 coiled-coil regions span residues 194-249, 337-455, and 551-650; these read LKAE…LKSI, EKAK…RALE, and ALER…VKAL. Residues 366 to 459 enclose the Zinc-hook domain; it reads EIAELQNKIN…KIRALEKYKG (94 aa). Zn(2+) is bound by residues Cys411 and Cys414.

The protein belongs to the SMC family. RAD50 subfamily. Homodimer. Forms a heterotetramer composed of two Mre11 subunits and two Rad50 subunits. It depends on Zn(2+) as a cofactor.

In terms of biological role, part of the Rad50/Mre11 complex, which is involved in the early steps of DNA double-strand break (DSB) repair. The complex may facilitate opening of the processed DNA ends to aid in the recruitment of HerA and NurA. Rad50 controls the balance between DNA end bridging and DNA resection via ATP-dependent structural rearrangements of the Rad50/Mre11 complex. The polypeptide is DNA double-strand break repair Rad50 ATPase (Nanoarchaeum equitans (strain Kin4-M)).